The following is a 356-amino-acid chain: 3-isopropylmalate dehydrogenase (356 aa).

Residues arginine 95, arginine 105, arginine 133, and aspartate 223 each coordinate substrate. Positions 223, 247, and 251 each coordinate Mg(2+). Position 281-293 (281-293) interacts with NAD(+); the sequence is GSAPDIAGQNKAN.

The protein belongs to the isocitrate and isopropylmalate dehydrogenases family. LeuB type 1 subfamily. As to quaternary structure, homodimer. It depends on Mg(2+) as a cofactor. The cofactor is Mn(2+).

The protein resides in the cytoplasm. It carries out the reaction (2R,3S)-3-isopropylmalate + NAD(+) = 4-methyl-2-oxopentanoate + CO2 + NADH. It participates in amino-acid biosynthesis; L-leucine biosynthesis; L-leucine from 3-methyl-2-oxobutanoate: step 3/4. Its function is as follows. Catalyzes the oxidation of 3-carboxy-2-hydroxy-4-methylpentanoate (3-isopropylmalate) to 3-carboxy-4-methyl-2-oxopentanoate. The product decarboxylates to 4-methyl-2 oxopentanoate. The chain is 3-isopropylmalate dehydrogenase from Neisseria meningitidis serogroup B (strain ATCC BAA-335 / MC58).